Here is a 349-residue protein sequence, read N- to C-terminus: Probable trehalose-phosphate phosphatase H (349 aa).

It belongs to the trehalose phosphatase family. A divalent metal cation serves as cofactor.

It carries out the reaction alpha,alpha-trehalose 6-phosphate + H2O = alpha,alpha-trehalose + phosphate. The protein operates within glycan biosynthesis; trehalose biosynthesis. Functionally, removes the phosphate from trehalose 6-phosphate to produce free trehalose. Trehalose accumulation in plant may improve abiotic stress tolerance. This chain is Probable trehalose-phosphate phosphatase H (TPPH), found in Arabidopsis thaliana (Mouse-ear cress).